Reading from the N-terminus, the 195-residue chain is Transcriptional regulator GfcR (195 aa).

This sequence belongs to the purine/pyrimidine phosphoribosyltransferase family. GfcR subfamily.

This is Transcriptional regulator GfcR from Picrophilus torridus (strain ATCC 700027 / DSM 9790 / JCM 10055 / NBRC 100828 / KAW 2/3).